A 488-amino-acid polypeptide reads, in one-letter code: Glutamate--tRNA ligase (488 aa).

Positions 12 to 22 (PSPTGYMHVGN) match the 'HIGH' region motif. 4 residues coordinate Zn(2+): Cys-109, Cys-111, Cys-136, and His-138. Residues 253-257 (KLSKR) carry the 'KMSKS' region motif. Lys-256 provides a ligand contact to ATP.

It belongs to the class-I aminoacyl-tRNA synthetase family. Glutamate--tRNA ligase type 1 subfamily. As to quaternary structure, monomer. Zn(2+) is required as a cofactor.

It is found in the cytoplasm. The catalysed reaction is tRNA(Glu) + L-glutamate + ATP = L-glutamyl-tRNA(Glu) + AMP + diphosphate. Functionally, catalyzes the attachment of glutamate to tRNA(Glu) in a two-step reaction: glutamate is first activated by ATP to form Glu-AMP and then transferred to the acceptor end of tRNA(Glu). In Clostridium tetani (strain Massachusetts / E88), this protein is Glutamate--tRNA ligase.